A 264-amino-acid chain; its full sequence is MSKPTTIAVLQKCKQEKKRFATITAYDYSFAKLFADEGINVMLVGDSLGMTIQGHDSTLPVTVEDIAYHTRAVRRGAPNCLLLSDLPFMAYATPEQAFENAAIVMRAGANMVKIEGGAWLVDTVKMLTERAVPVCGHLGLTPQSVNIFGGYKIQGRGDAGQILLDDALALEAAGAQLLVLECVPVELAKRVTEALSIPVIGIGAGNVTDGQILVMHDAFGITGGHIPKFAKNFLAEAGDMRAAVRQYMAEVESGVYPGEEHSFH.

Mg(2+) is bound by residues Asp-46 and Asp-85. 3-methyl-2-oxobutanoate-binding positions include 46–47, Asp-85, and Lys-113; that span reads DS. Mg(2+) is bound at residue Glu-115. Glu-181 acts as the Proton acceptor in catalysis.

This sequence belongs to the PanB family. Homodecamer; pentamer of dimers. Requires Mg(2+) as cofactor.

The protein resides in the cytoplasm. It catalyses the reaction 3-methyl-2-oxobutanoate + (6R)-5,10-methylene-5,6,7,8-tetrahydrofolate + H2O = 2-dehydropantoate + (6S)-5,6,7,8-tetrahydrofolate. It functions in the pathway cofactor biosynthesis; (R)-pantothenate biosynthesis; (R)-pantoate from 3-methyl-2-oxobutanoate: step 1/2. Its function is as follows. Catalyzes the reversible reaction in which hydroxymethyl group from 5,10-methylenetetrahydrofolate is transferred onto alpha-ketoisovalerate to form ketopantoate. This Salmonella typhi protein is 3-methyl-2-oxobutanoate hydroxymethyltransferase.